Here is a 127-residue protein sequence, read N- to C-terminus: Aspartate 1-decarboxylase (127 aa).

The active-site Schiff-base intermediate with substrate; via pyruvic acid is the S25. S25 is modified (pyruvic acid (Ser)). T57 provides a ligand contact to substrate. Catalysis depends on Y58, which acts as the Proton donor. 73–75 (GAA) is a binding site for substrate.

The protein belongs to the PanD family. In terms of assembly, heterooctamer of four alpha and four beta subunits. The cofactor is pyruvate. Is synthesized initially as an inactive proenzyme, which is activated by self-cleavage at a specific serine bond to produce a beta-subunit with a hydroxyl group at its C-terminus and an alpha-subunit with a pyruvoyl group at its N-terminus.

It localises to the cytoplasm. It catalyses the reaction L-aspartate + H(+) = beta-alanine + CO2. It participates in cofactor biosynthesis; (R)-pantothenate biosynthesis; beta-alanine from L-aspartate: step 1/1. Functionally, catalyzes the pyruvoyl-dependent decarboxylation of aspartate to produce beta-alanine. The protein is Aspartate 1-decarboxylase of Staphylococcus aureus (strain bovine RF122 / ET3-1).